The sequence spans 187 residues: Peptidyl-tRNA hydrolase (187 aa).

Position 14 (Phe14) interacts with tRNA. His19 (proton acceptor) is an active-site residue. Residues Tyr64, Asn66, and Asn112 each contribute to the tRNA site.

It belongs to the PTH family. As to quaternary structure, monomer.

Its subcellular location is the cytoplasm. It catalyses the reaction an N-acyl-L-alpha-aminoacyl-tRNA + H2O = an N-acyl-L-amino acid + a tRNA + H(+). Hydrolyzes ribosome-free peptidyl-tRNAs (with 1 or more amino acids incorporated), which drop off the ribosome during protein synthesis, or as a result of ribosome stalling. Functionally, catalyzes the release of premature peptidyl moieties from peptidyl-tRNA molecules trapped in stalled 50S ribosomal subunits, and thus maintains levels of free tRNAs and 50S ribosomes. The sequence is that of Peptidyl-tRNA hydrolase from Oceanobacillus iheyensis (strain DSM 14371 / CIP 107618 / JCM 11309 / KCTC 3954 / HTE831).